The primary structure comprises 67 residues: uncharacterized protein (67 aa).

Residues tryptophan 4–phenylalanine 24 traverse the membrane as a helical segment.

It localises to the membrane. This is an uncharacterized protein from Bacillus anthracis.